The following is a 199-amino-acid chain: Protein-methionine-sulfoxide reductase heme-binding subunit MsrQ (199 aa).

4 helical membrane passes run 8–28, 82–102, 116–136, and 153–173; these read IIWL…WLFW, LWCF…ELGI, PYLT…LTST, and VVYL…KVLS.

Belongs to the MsrQ family. Heterodimer of a catalytic subunit (MsrP) and a heme-binding subunit (MsrQ). It depends on FMN as a cofactor. Heme b is required as a cofactor.

Its subcellular location is the cell inner membrane. In terms of biological role, part of the MsrPQ system that repairs oxidized periplasmic proteins containing methionine sulfoxide residues (Met-O), using respiratory chain electrons. Thus protects these proteins from oxidative-stress damage caused by reactive species of oxygen and chlorine generated by the host defense mechanisms. MsrPQ is essential for the maintenance of envelope integrity under bleach stress, rescuing a wide series of structurally unrelated periplasmic proteins from methionine oxidation, including the primary periplasmic chaperone SurA and the lipoprotein Pal. MsrQ provides electrons for reduction to the reductase catalytic subunit MsrP, using the quinone pool of the respiratory chain. The protein is Protein-methionine-sulfoxide reductase heme-binding subunit MsrQ of Salmonella arizonae (strain ATCC BAA-731 / CDC346-86 / RSK2980).